The sequence spans 384 residues: Histidinol-phosphate aminotransferase 2 (384 aa).

N6-(pyridoxal phosphate)lysine is present on K236.

This sequence belongs to the class-II pyridoxal-phosphate-dependent aminotransferase family. Histidinol-phosphate aminotransferase subfamily. Homodimer. Pyridoxal 5'-phosphate is required as a cofactor.

It carries out the reaction L-histidinol phosphate + 2-oxoglutarate = 3-(imidazol-4-yl)-2-oxopropyl phosphate + L-glutamate. It functions in the pathway amino-acid biosynthesis; L-histidine biosynthesis; L-histidine from 5-phospho-alpha-D-ribose 1-diphosphate: step 7/9. The polypeptide is Histidinol-phosphate aminotransferase 2 (hisC2) (Nostoc sp. (strain PCC 7120 / SAG 25.82 / UTEX 2576)).